The chain runs to 458 residues: Ig mu chain C region secreted form (458 aa).

The interval 1–106 is CH1; sequence VSLSSPTLYP…SNRDLRVSFP (106 aa). Cysteine 28 and cysteine 90 form a disulfide bridge. Residues asparagine 46 and asparagine 114 are each glycosylated (N-linked (GlcNAc...) asparagine). Positions 107-222 are CH2; sequence VDSELPPNVS…VSMSSECSTT (116 aa). Residues cysteine 137 and cysteine 200 are joined by a disulfide bond. Asparagine 212, asparagine 261, asparagine 277, and asparagine 284 each carry an N-linked (GlcNAc...) asparagine glycan. Positions 223-327 are CH3; the sequence is PSPGIQVFPI…PLKHTISKSR (105 aa). Intrachain disulfides connect cysteine 249-cysteine 308 and cysteine 356-cysteine 418. Positions 328–458 are CH4; that stretch reads EVAKHPPAVY…IMSDTASTCY (131 aa). Residue asparagine 445 is glycosylated (N-linked (GlcNAc...) asparagine).

It is found in the secreted. The sequence is that of Ig mu chain C region secreted form from Oryctolagus cuniculus (Rabbit).